Consider the following 735-residue polypeptide: Photosystem I P700 chlorophyll a apoprotein A2 (735 aa).

8 consecutive transmembrane segments (helical) span residues 47–70 (IFASHFGQLAIIFLWTSGNLFHVA), 136–159 (LYVGSVFLALVSAIFLFAGWLHLQ), 176–200 (LNHHLSGLFGVSSLAWTGHLVHVAI), 274–292 (MAHHHLAIAVLFIVAGHMY), 331–354 (LHFQLGLALASVGTICSLVAQHMY), 370–396 (AALYTHHQYIAGFIMCGAFAHGAIFWI), 418–440 (AIISHLSWVSLFLGFHTLGLYVH), and 518–536 (FLVHHAIALGLHTTTLILV). 2 residues coordinate [4Fe-4S] cluster: Cys-560 and Cys-569. 2 consecutive transmembrane segments (helical) span residues 576 to 597 (AFYLAVFWMLNTIGWVTFYWHW) and 644 to 666 (LSVWAWMFLAGHLVYATGFMFLI). Chlorophyll a-binding residues include His-655, Met-663, and Tyr-671. Residue Trp-672 participates in phylloquinone binding. A helical membrane pass occupies residues 708-728 (LVGLAHFSVGYVFTYAAFVIA).

It belongs to the PsaA/PsaB family. In terms of assembly, the PsaA/B heterodimer binds the P700 chlorophyll special pair and subsequent electron acceptors. PSI consists of a core antenna complex that captures photons, and an electron transfer chain that converts photonic excitation into a charge separation. The eukaryotic PSI reaction center is composed of at least 11 subunits. Requires P700 is a chlorophyll a/chlorophyll a' dimer, A0 is one or more chlorophyll a, A1 is one or both phylloquinones and FX is a shared 4Fe-4S iron-sulfur center. as cofactor.

Its subcellular location is the plastid. It localises to the chloroplast thylakoid membrane. It catalyses the reaction reduced [plastocyanin] + hnu + oxidized [2Fe-2S]-[ferredoxin] = oxidized [plastocyanin] + reduced [2Fe-2S]-[ferredoxin]. In terms of biological role, psaA and PsaB bind P700, the primary electron donor of photosystem I (PSI), as well as the electron acceptors A0, A1 and FX. PSI is a plastocyanin/cytochrome c6-ferredoxin oxidoreductase, converting photonic excitation into a charge separation, which transfers an electron from the donor P700 chlorophyll pair to the spectroscopically characterized acceptors A0, A1, FX, FA and FB in turn. Oxidized P700 is reduced on the lumenal side of the thylakoid membrane by plastocyanin or cytochrome c6. The sequence is that of Photosystem I P700 chlorophyll a apoprotein A2 from Tetradesmus obliquus (Green alga).